A 160-amino-acid polypeptide reads, in one-letter code: Glyoxalase domain-containing protein 5 (160 aa).

Residues 33-153 (RLDHLVLTVR…DHNLIEVSNY (121 aa)) form the VOC domain.

Belongs to the glyoxalase I family.

The polypeptide is Glyoxalase domain-containing protein 5 (glod5) (Xenopus laevis (African clawed frog)).